The chain runs to 258 residues: 5'-nucleotidase SurE (258 aa).

A divalent metal cation contacts are provided by D8, D9, S40, and N93.

Belongs to the SurE nucleotidase family. Requires a divalent metal cation as cofactor.

It localises to the cytoplasm. The catalysed reaction is a ribonucleoside 5'-phosphate + H2O = a ribonucleoside + phosphate. Its function is as follows. Nucleotidase that shows phosphatase activity on nucleoside 5'-monophosphates. The polypeptide is 5'-nucleotidase SurE (Afipia carboxidovorans (strain ATCC 49405 / DSM 1227 / KCTC 32145 / OM5) (Oligotropha carboxidovorans)).